The primary structure comprises 81 residues: Gamma-conotoxin-like TeA53 (81 aa).

The signal sequence occupies residues Met-1–Ala-19. Residues Leu-20–Arg-42 constitute a propeptide that is removed on maturation. 3 disulfides stabilise this stretch: Cys-49/Cys-63, Cys-56/Cys-67, and Cys-62/Cys-72.

This sequence belongs to the conotoxin O2 superfamily. Expressed by the venom duct.

The protein localises to the secreted. In terms of biological role, gamma-conotoxins may act on voltage-gated non-specific cation pacemaker channels (HCN). This is Gamma-conotoxin-like TeA53 from Conus textile (Cloth-of-gold cone).